We begin with the raw amino-acid sequence, 618 residues long: Leucine aminopeptidase 2 (618 aa).

A peptide-binding positions include 140-142 (QCQ) and 272-277 (PYGGME). Residue His-301 participates in Zn(2+) binding. Glu-302 acts as the Proton acceptor in catalysis. Residues His-305 and Glu-324 each contribute to the Zn(2+) site. The active-site Proton donor is Tyr-389.

The protein belongs to the peptidase M1 family. It depends on Zn(2+) as a cofactor.

The protein resides in the cytoplasm. Its subcellular location is the nucleus. The enzyme catalyses an epoxide + H2O = an ethanediol. Functionally, aminopeptidase that preferentially cleaves di- and tripeptides. Also has low epoxide hydrolase activity (in vitro). Can hydrolyze the epoxide leukotriene LTA(4) but it forms preferentially 5,6-dihydroxy-7,9,11,14-eicosatetraenoic acid rather than the cytokine leukotriene B(4) as the product compared to the homologous mammalian enzyme (in vitro). This is Leucine aminopeptidase 2 from Emericella nidulans (strain FGSC A4 / ATCC 38163 / CBS 112.46 / NRRL 194 / M139) (Aspergillus nidulans).